We begin with the raw amino-acid sequence, 298 residues long: Probable endonuclease 4 (298 aa).

9 residues coordinate Zn(2+): His70, His111, Glu146, Asp180, His183, His215, Asp228, His230, and Glu260.

It belongs to the AP endonuclease 2 family. Requires Zn(2+) as cofactor.

It carries out the reaction Endonucleolytic cleavage to 5'-phosphooligonucleotide end-products.. Its function is as follows. Endonuclease IV plays a role in DNA repair. It cleaves phosphodiester bonds at apurinic or apyrimidinic (AP) sites, generating a 3'-hydroxyl group and a 5'-terminal sugar phosphate. The polypeptide is Probable endonuclease 4 (Halalkalibacterium halodurans (strain ATCC BAA-125 / DSM 18197 / FERM 7344 / JCM 9153 / C-125) (Bacillus halodurans)).